The chain runs to 471 residues: 5-hydroxytryptamine receptor 2A (471 aa).

The Extracellular segment spans residues 1–80; that stretch reads MEILCEDNIS…LQEKNWSALL (80 aa). 5 N-linked (GlcNAc...) asparagine glycosylation sites follow: N8, N38, N44, N51, and N54. Residues 81–97 form a helical membrane-spanning segment; sequence TTVVIILTIAGNILVIM. At 98–111 the chain is on the cytoplasmic side; sequence AVSLEKKLQNATNY. A helical membrane pass occupies residues 112–137; sequence FLMSLAIADMLLGFLVMPVSMLTILY. Over 138 to 146 the chain is Extracellular; the sequence is GYRWPLPSK. A helical membrane pass occupies residues 147–171; that stretch reads LCAIWIYLDVLFSTASIMHLCAISL. C148 and C227 are oxidised to a cystine. Serotonin is bound at residue D155. The short motif at 172–174 is the DRY motif; important for ligand-induced conformation changes element; it reads DRY. Residues 172-191 are Cytoplasmic-facing; sequence DRYVAIQNPIHHSRFNSRTK. Residues 192–215 form a helical membrane-spanning segment; sequence AFLKIIAVWTISVGISMPIPVFGL. Over 216–232 the chain is Extracellular; the sequence is QDDSKVFKEGSCLLADD. Residues 233–258 traverse the membrane as a helical segment; the sequence is NFVLIGSFVAFFIPLTIMVITYFLTI. The Cytoplasmic portion of the chain corresponds to 259–322; the sequence is KSLQKEATLC…QSISNEQKAC (64 aa). A Phosphoserine modification is found at S280. Residues 323–348 form a helical membrane-spanning segment; sequence KVLGIVFFLFVVMWCPFFITNIMAVI. Serotonin is bound at residue N343. C349 and C353 are disulfide-bonded. At 349 to 356 the chain is on the extracellular side; the sequence is CKESCNEN. Residues 357 to 382 form a helical membrane-spanning segment; the sequence is VIGALLNVFVWIGYLSSAVNPLVYTL. The NPxxY motif; important for ligand-induced conformation changes and signaling signature appears at 376 to 380; that stretch reads NPLVY. The Cytoplasmic segment spans residues 383–471; that stretch reads FNKTYRSAFS…ETVNEKVSCV (89 aa). The PDZ-binding signature appears at 469–471; that stretch reads SCV.

The protein belongs to the G-protein coupled receptor 1 family. In terms of assembly, interacts (via C-terminus) with MPDZ and PATJ. May interact (via C-terminus) with MPP3, PRDX6, DLG4, DLG1, CASK, APBA1 and MAGI2. Interacts with GRM2 and DRD2; this may affect signaling. As to expression, detected in adult intestine, especially in mucosal epithelium, longitudinal and circular layers of muscularis externa and myenteric plexuses. Highly expressed in Paneth cells, and detected at lower levels in enterocytes (at protein level). Detected in brain cortex.

It localises to the cell membrane. The protein resides in the cell projection. It is found in the axon. The protein localises to the cytoplasmic vesicle. Its subcellular location is the membrane. It localises to the caveola. The protein resides in the dendrite. It is found in the presynapse. G-protein coupled receptor activity is regulated by lipids: oleamide increases HTR2A-mediated activity. G-protein coupled receptor for 5-hydroxytryptamine (serotonin). Also functions as a receptor for various drugs and psychoactive substances, including mescaline, psilocybin, 1-(2,5-dimethoxy-4-iodophenyl)-2-aminopropane (DOI) and lysergic acid diethylamide (LSD). Ligand binding causes a conformation change that triggers signaling via guanine nucleotide-binding proteins (G proteins) and modulates the activity of downstream effectors. HTR2A is coupled to G(q)/G(11) G alpha proteins and activates phospholipase C-beta, releasing diacylglycerol (DAG) and inositol 1,4,5-trisphosphate (IP3) second messengers that modulate the activity of phosphatidylinositol 3-kinase and promote the release of Ca(2+) ions from intracellular stores, respectively. Beta-arrestin family members inhibit signaling via G proteins and mediate activation of alternative signaling pathways. Affects neural activity, perception, cognition and mood. Plays a role in the regulation of behavior, including responses to anxiogenic situations and psychoactive substances. Plays a role in intestinal smooth muscle contraction, and may play a role in arterial vasoconstriction. In Rattus norvegicus (Rat), this protein is 5-hydroxytryptamine receptor 2A (Htr2a).